A 236-amino-acid chain; its full sequence is Purine nucleoside phosphorylase DeoD-type (236 aa).

His-4 serves as a coordination point for a purine D-ribonucleoside. Phosphate-binding positions include Gly-20, Arg-24, Arg-43, and 87-90 (RVGT). Residues 179–181 (EME) and 203–204 (SD) each bind a purine D-ribonucleoside. Catalysis depends on Asp-204, which acts as the Proton donor.

Belongs to the PNP/UDP phosphorylase family. In terms of assembly, homohexamer; trimer of homodimers.

It carries out the reaction a purine D-ribonucleoside + phosphate = a purine nucleobase + alpha-D-ribose 1-phosphate. The enzyme catalyses a purine 2'-deoxy-D-ribonucleoside + phosphate = a purine nucleobase + 2-deoxy-alpha-D-ribose 1-phosphate. Catalyzes the reversible phosphorolytic breakdown of the N-glycosidic bond in the beta-(deoxy)ribonucleoside molecules, with the formation of the corresponding free purine bases and pentose-1-phosphate. In Streptococcus pneumoniae (strain JJA), this protein is Purine nucleoside phosphorylase DeoD-type.